We begin with the raw amino-acid sequence, 882 residues long: Valine--tRNA ligase (882 aa).

The short motif at 45–55 is the 'HIGH' region element; sequence PNVTGKLHLGH. The 'KMSKS' region signature appears at 519–523; sequence KMSKS. Lys522 contributes to the ATP binding site. Positions 808–877 form a coiled coil; sequence LADLLNVEEE…DATQERIVEM (70 aa).

Belongs to the class-I aminoacyl-tRNA synthetase family. ValS type 1 subfamily. Monomer.

The protein resides in the cytoplasm. The enzyme catalyses tRNA(Val) + L-valine + ATP = L-valyl-tRNA(Val) + AMP + diphosphate. Catalyzes the attachment of valine to tRNA(Val). As ValRS can inadvertently accommodate and process structurally similar amino acids such as threonine, to avoid such errors, it has a 'posttransfer' editing activity that hydrolyzes mischarged Thr-tRNA(Val) in a tRNA-dependent manner. The protein is Valine--tRNA ligase of Streptococcus pyogenes serotype M6 (strain ATCC BAA-946 / MGAS10394).